The following is a 552-amino-acid chain: Formate--tetrahydrofolate ligase (552 aa).

Residue 65–72 (TPAGEGKT) participates in ATP binding.

It belongs to the formate--tetrahydrofolate ligase family.

It catalyses the reaction (6S)-5,6,7,8-tetrahydrofolate + formate + ATP = (6R)-10-formyltetrahydrofolate + ADP + phosphate. It functions in the pathway one-carbon metabolism; tetrahydrofolate interconversion. In Fervidobacterium nodosum (strain ATCC 35602 / DSM 5306 / Rt17-B1), this protein is Formate--tetrahydrofolate ligase.